The sequence spans 522 residues: 2-isopropylmalate synthase (522 aa).

The Pyruvate carboxyltransferase domain occupies 5–267 (VIIFDTTLRD…ETGINAKEIH (263 aa)). Mn(2+)-binding residues include aspartate 14, histidine 202, histidine 204, and asparagine 238. Residues 392–522 (QLRQLVVQSD…MHKNRELGGV (131 aa)) are regulatory domain.

The protein belongs to the alpha-IPM synthase/homocitrate synthase family. LeuA type 1 subfamily. As to quaternary structure, homodimer. Mn(2+) serves as cofactor.

The protein localises to the cytoplasm. The catalysed reaction is 3-methyl-2-oxobutanoate + acetyl-CoA + H2O = (2S)-2-isopropylmalate + CoA + H(+). Its pathway is amino-acid biosynthesis; L-leucine biosynthesis; L-leucine from 3-methyl-2-oxobutanoate: step 1/4. Functionally, catalyzes the condensation of the acetyl group of acetyl-CoA with 3-methyl-2-oxobutanoate (2-ketoisovalerate) to form 3-carboxy-3-hydroxy-4-methylpentanoate (2-isopropylmalate). The sequence is that of 2-isopropylmalate synthase from Shewanella oneidensis (strain ATCC 700550 / JCM 31522 / CIP 106686 / LMG 19005 / NCIMB 14063 / MR-1).